We begin with the raw amino-acid sequence, 279 residues long: HTH-type transcriptional regulator HdfR (279 aa).

Residues 1–58 form the HTH lysR-type domain; sequence MDTELLKTFLEVSRTRHFGRAAESLYLTQSAVSFRIRQLENQLGVNLFTRHRNNIRLT. The H-T-H motif DNA-binding region spans 18–37; it reads FGRAAESLYLTQSAVSFRIR.

Belongs to the LysR transcriptional regulatory family.

Negatively regulates the transcription of the flagellar master operon flhDC by binding to the upstream region of the operon. This chain is HTH-type transcriptional regulator HdfR, found in Escherichia coli O17:K52:H18 (strain UMN026 / ExPEC).